The following is a 607-amino-acid chain: UvrABC system protein C (607 aa).

Residues 16-94 (GRPGVYRMFD…IKEWRPPYNI (79 aa)) form the GIY-YIG domain. A UVR domain is found at 203–238 (QQLGNELNAEMEKAAMALDFEKAAELRDQIALLRRV).

This sequence belongs to the UvrC family. As to quaternary structure, interacts with UvrB in an incision complex.

The protein resides in the cytoplasm. In terms of biological role, the UvrABC repair system catalyzes the recognition and processing of DNA lesions. UvrC both incises the 5' and 3' sides of the lesion. The N-terminal half is responsible for the 3' incision and the C-terminal half is responsible for the 5' incision. This chain is UvrABC system protein C, found in Pseudomonas putida (strain ATCC 700007 / DSM 6899 / JCM 31910 / BCRC 17059 / LMG 24140 / F1).